A 324-amino-acid polypeptide reads, in one-letter code: Fructose-1,6-bisphosphatase class 1 (324 aa).

Glutamate 88, aspartate 107, leucine 109, and aspartate 110 together coordinate Mg(2+). Substrate-binding positions include 110–113 (DGSS), asparagine 199, and lysine 265. Mg(2+) is bound at residue glutamate 271.

This sequence belongs to the FBPase class 1 family. As to quaternary structure, homotetramer. It depends on Mg(2+) as a cofactor.

It is found in the cytoplasm. The catalysed reaction is beta-D-fructose 1,6-bisphosphate + H2O = beta-D-fructose 6-phosphate + phosphate. It participates in carbohydrate biosynthesis; gluconeogenesis. This Neisseria meningitidis serogroup B (strain ATCC BAA-335 / MC58) protein is Fructose-1,6-bisphosphatase class 1.